Reading from the N-terminus, the 216-residue chain is Sperm microtubule inner protein 8 (216 aa).

As to quaternary structure, microtubule inner protein component of sperm flagellar doublet microtubules. In terms of tissue distribution, expressed in testis, prostate and placenta.

It localises to the cytoplasm. Its subcellular location is the cytoskeleton. It is found in the flagellum axoneme. Its function is as follows. Microtubule inner protein (MIP) part of the dynein-decorated doublet microtubules (DMTs) in flagellum axoneme. May serve to reinforce and thus stabilize the microtubule structure in the sperm flagella. The chain is Sperm microtubule inner protein 8 from Homo sapiens (Human).